The chain runs to 787 residues: Disease resistance protein ADR1 (787 aa).

Positions 1–149 (MASFIDLFAG…LLTERNDSLS (149 aa)) constitute an RPW8 domain. A coiled-coil region spans residues 96 to 112 (HANKMKDLEKQISRFLN). 193-200 (GMSGSGKT) contacts ATP. Positions 247–414 (HQRKLVILDD…PLDLLTSVWV (168 aa)) constitute an NB-ARC domain. LRR repeat units lie at residues 549–575 (MSRLRVLVIINNGMSPARLHGFSIFAN), 576–599 (LAKLRSLWLKRVHVPELTSCTIPL), 650–674 (ITSLNSLSITNCPRILELPKNLSNV), and 722–745 (LGSLEKIDMRECSLLGLPSSVAAL).

This sequence belongs to the disease resistance NB-LRR family.

Its function is as follows. Disease resistance (R) protein that mediates resistance against Hyaloperonospora parasitica in a salicylic acid-dependent manner. Also mediates resistance against Erysiphe cichoracearum is both salicylic acid-dependent and partially NPR1-dependent. Resistance proteins guard the plant against pathogens that contain an appropriate avirulence protein via an indirect interaction with this avirulence protein. That triggers a defense system including the hypersensitive response, which restricts the pathogen growth. The chain is Disease resistance protein ADR1 (ADR1) from Arabidopsis thaliana (Mouse-ear cress).